Consider the following 615-residue polypeptide: DNA mismatch repair protein MutL (615 aa).

The interval 370–397 (EPVAPRYTPAPASGSRPAAPWPNTQPGY) is disordered. Over residues 378–391 (PAPASGSRPAAPWP) the composition is skewed to low complexity.

The protein belongs to the DNA mismatch repair MutL/HexB family.

This protein is involved in the repair of mismatches in DNA. It is required for dam-dependent methyl-directed DNA mismatch repair. May act as a 'molecular matchmaker', a protein that promotes the formation of a stable complex between two or more DNA-binding proteins in an ATP-dependent manner without itself being part of a final effector complex. This chain is DNA mismatch repair protein MutL, found in Shigella dysenteriae serotype 1 (strain Sd197).